Here is a 384-residue protein sequence, read N- to C-terminus: Lipoprotein LprN (384 aa).

Residues 1–20 form the signal peptide; that stretch reads MNRIWLRAIILTASSALLAG. The N-palmitoyl cysteine moiety is linked to residue C21. The S-diacylglycerol cysteine moiety is linked to residue C21.

Post-translationally, lipidated upon expression in E.coli.

Its subcellular location is the cell membrane. In terms of biological role, stimulates the host (mouse) immune response; lipidated protein produced in E.coli stimulates T-cell proliferation in mice previously sensitized with LprN. Spleenocytes from these mice produce increased amounts of TNF-alpha and IFN-gamma, as well as somewhat increased nitric oxide levels, upon subsequent challenge with LprN. Previously sensitized mice infected with M.tuberculosis have an exacerbated disease response, suggesting this lipoprotein may down-regulate the host's immune response. The chain is Lipoprotein LprN (lprN) from Mycobacterium tuberculosis (strain ATCC 25618 / H37Rv).